The chain runs to 504 residues: Maturase K (504 aa).

This sequence belongs to the intron maturase 2 family. MatK subfamily.

It localises to the plastid. The protein resides in the chloroplast. Functionally, usually encoded in the trnK tRNA gene intron. Probably assists in splicing its own and other chloroplast group II introns. The chain is Maturase K from Lepidium virginicum (Virginia pepperweed).